A 345-amino-acid chain; its full sequence is Meiotic recombination protein rec12 (345 aa).

Positions 5 to 137 (DKKKVVRSWI…LNVEASAKGL (133 aa)) constitute a Topo IIA-type catalytic domain. The active-site O-(5'-phospho-DNA)-tyrosine intermediate is the Tyr-98. Residues Glu-179 and Asp-229 each contribute to the Mg(2+) site.

Belongs to the TOP6A family. As to quaternary structure, component of the DSB catalytic core (DSBC) complex, composed of at least rec12, rec6 and rec14. The complex interacts with mde2. It depends on Mg(2+) as a cofactor.

It is found in the cytoplasm. It localises to the nucleus. The enzyme catalyses ATP-dependent breakage, passage and rejoining of double-stranded DNA.. Required for formation of the double-strand breaks (DSBs) that initiate meiotic recombination. Required for crossover recombination and chiasmatic segregation of chromosomes during meiosis I. Also involved in the faithful equational segregation of chromosomes during meiosis II. In Schizosaccharomyces pombe (strain 972 / ATCC 24843) (Fission yeast), this protein is Meiotic recombination protein rec12.